A 135-amino-acid polypeptide reads, in one-letter code: Galectin-1 (135 aa).

A2 is modified (N-acetylalanine). The region spanning 4 to 135 (GLVASNLNLK…DFKIKCVAFE (132 aa)) is the Galectin domain. An N6-acetyllysine mark is found at K13, K19, and K29. S30 carries the post-translational modification Phosphoserine. A beta-D-galactoside is bound by residues 45 to 49 (HFNPR), H53, N62, and 69 to 72 (WGTE). N6-acetyllysine; alternate is present on K108. K108 carries the N6-succinyllysine; alternate modification. K128 carries the post-translational modification N6-acetyllysine.

Homodimer. Binds LGALS3BP. Interacts with CD2, CD3, CD4, CD6, CD7, CD43, ALCAM and CD45. Interacts with laminin (via poly-N-acetyllactosamine). Interacts with SUSD2. Interacts with cargo receptor TMED10; the interaction mediates the translocation from the cytoplasm into the ERGIC (endoplasmic reticulum-Golgi intermediate compartment) and thereby secretion. Interacts with CD69.

The protein resides in the secreted. Its subcellular location is the extracellular space. It localises to the extracellular matrix. It is found in the cytoplasm. Functionally, lectin that binds beta-galactoside and a wide array of complex carbohydrates. Plays a role in regulating apoptosis, cell proliferation and cell differentiation. Inhibits CD45 protein phosphatase activity and therefore the dephosphorylation of Lyn kinase. Strong inducer of T-cell apoptosis. Plays a negative role in Th17 cell differentiation via activation of the receptor CD69. In Rattus norvegicus (Rat), this protein is Galectin-1 (Lgals1).